The sequence spans 314 residues: Protein ATP1B4 (314 aa).

Residues Met1–Ser17 show a composition bias toward polar residues. The segment at Met1 to Gln37 is disordered. The Cytoplasmic segment spans residues Met1–Ala69. Over residues Ser19–Gln37 the composition is skewed to basic and acidic residues. A helical transmembrane segment spans residues Leu70–Ile90. Residues Tyr91–Gly314 are Extracellular-facing. Cys160 and Cys179 are joined by a disulfide. An N-linked (GlcNAc...) asparagine glycan is attached at Asn188. 2 disulfides stabilise this stretch: Cys189/Cys205 and Cys228/Cys287. Residue Asn264 is glycosylated (N-linked (GlcNAc...) asparagine).

Belongs to the X(+)/potassium ATPases subunit beta family. In terms of assembly, composed of two subunits: alpha (catalytic) and beta (accessory). Post-translationally, glycosylated. As to expression, expressed in skeletal muscle, liver, lung, kidney, heart, brain and skin.

The protein localises to the membrane. Functionally, this is the non-catalytic component of the active enzyme, which catalyzes the hydrolysis of ATP coupled with the exchange of Na(+) and K(+) ions across the plasma membrane. The sequence is that of Protein ATP1B4 (atp1b4) from Xenopus laevis (African clawed frog).